The chain runs to 524 residues: Inorganic phosphate transporter 1-1 (524 aa).

Over 1 to 24 the chain is Cytoplasmic; the sequence is MAEQQLGVLKALDVAKTQLYHFTA. Residues 25-45 form a helical membrane-spanning segment; it reads IVIAGMGFFTDAYDLFCVSLV. Residues 46–70 are Extracellular-facing; the sequence is TKLLGRIYYFNPESAKPGSLPPHVA. The chain crosses the membrane as a helical span at residues 71-91; sequence AAVNGVALCGTLSGQLFFGWL. Over 92–99 the chain is Cytoplasmic; sequence GDKLGRKK. The helical transmembrane segment at 100–120 threads the bilayer; sequence VYGLTLVMMILCSVASGLSFG. The Extracellular portion of the chain corresponds to 121–131; it reads HEAKGVMTTLC. The helical transmembrane segment at 132-152 threads the bilayer; the sequence is FFRFWLGFGIGGDYPLSATIM. Over 153 to 161 the chain is Cytoplasmic; it reads SEYANKKTR. The helical transmembrane segment at 162–182 threads the bilayer; that stretch reads GAFIAAVFAMQGVGILAGGFV. Topologically, residues 183–211 are extracellular; that stretch reads ALAVSSIFDKKFPAPTYAVNRALSTPPQV. Residues 212–232 form a helical membrane-spanning segment; it reads DYIWRIIVMFGALPAALTYYW. The Cytoplasmic portion of the chain corresponds to 233–292; it reads RMKMPETARYTALVAKNIKQATADMSKVLQTDIELEERVEDDVKDPKQNYGLFSKEFLRR. The helical transmembrane segment at 293-313 threads the bilayer; sequence HGLHLLGTTSTWFLLDIAFYS. At 314–348 the chain is on the extracellular side; sequence QNLFQKDIFSAIGWIPKAATMNATHEVFRIARAQT. Residues 349-369 traverse the membrane as a helical segment; that stretch reads LIALCSTVPGYWFTVAFIDTI. Residues 370 to 371 are Cytoplasmic-facing; that stretch reads GR. The chain crosses the membrane as a helical span at residues 372-392; the sequence is FKIQLNGFFMMTVFMFAIAFP. At 393–402 the chain is on the extracellular side; sequence YNHWIKPENR. A helical transmembrane segment spans residues 403 to 423; that stretch reads IGFVVMYSLTFFFANFGPNAT. At 424-441 the chain is on the cytoplasmic side; that stretch reads TFIVPAEIFPARLRSTCH. A helical membrane pass occupies residues 442 to 462; sequence GISAAAGKAGAIVGAFGFLYA. Residues 463 to 484 lie on the Extracellular side of the membrane; the sequence is AQSQDKAKVDAGYPPGIGVKNS. Residues 485–505 traverse the membrane as a helical segment; that stretch reads LIMLGVLNFIGMLFTFLVPEP. Residues 506-524 are Cytoplasmic-facing; that stretch reads KGKSLEELSGEAEVSHDEK.

Belongs to the major facilitator superfamily. Phosphate:H(+) symporter (TC 2.A.1.9) family. As to quaternary structure, interacts with NLA. Post-translationally, ubiquitinated by NLA. Ubiquitination of PHT1-1 leads to its degradation by the proteasome. As to expression, mostly expressed in roots, especially in trichoblasts and in emerging secondary roots and root hairs, but not in root tips. Also present in hydathodes, axillary buds and peripheral endosperm of germinating seeds.

It localises to the cell membrane. With respect to regulation, inhibited by protonophores (e.g. 2,4-dinitrophenol and carbonylcyanide m-chlorophenylhydrazone), the plasma membrane H(+)-ATPase inhibitor diethylstilbestorol, and the phosphate analog arsenate. In terms of biological role, high-affinity transporter for external inorganic phosphate. Acts as a H(+):phosphate symporter in both low- and high-Pi conditions. Confers sensitivity to arsenate. The sequence is that of Inorganic phosphate transporter 1-1 (PHT1-1) from Arabidopsis thaliana (Mouse-ear cress).